The following is a 119-amino-acid chain: Putative ankyrin repeat domain-containing protein 26-like 1 (119 aa).

The stretch at 15 to 112 forms a coiled coil; that stretch reads EKEEDLLHKN…EKQSRQRLTK (98 aa).

The protein is Putative ankyrin repeat domain-containing protein 26-like 1 (ANKRD36BP1) of Homo sapiens (Human).